Here is a 723-residue protein sequence, read N- to C-terminus: ATP-dependent zinc metalloprotease YME1 homolog (723 aa).

A helical transmembrane segment spans residues 198 to 220 (LTRFYIFLVFCIFFGYLTGRIRV). 288–295 (GPPGTGKT) serves as a coordination point for ATP. Residue H509 participates in Zn(2+) binding. E510 is an active-site residue. Residues H513 and D587 each coordinate Zn(2+).

This sequence in the N-terminal section; belongs to the AAA ATPase family. The protein in the C-terminal section; belongs to the peptidase M41 family. Requires Zn(2+) as cofactor.

It localises to the mitochondrion inner membrane. Its subcellular location is the mitochondrion. Functionally, ATP-dependent metalloprotease that catalyzes the degradation of folded and unfolded proteins with a suitable degron sequence in the mitochondrial intermembrane region. Plays an important role in regulating mitochondrial morphology and function. The chain is ATP-dependent zinc metalloprotease YME1 homolog (ymel-1) from Caenorhabditis elegans.